Reading from the N-terminus, the 324-residue chain is Taste receptor type 2 member 116 (324 aa).

Topologically, residues 1-2 are extracellular; it reads MN. A helical transmembrane segment spans residues 3-23; the sequence is GVLYITFTVILSVEVIIGNFG. At 24-55 the chain is on the cytoplasmic side; the sequence is NGIIALVNIMDLAKRRKISSVDQILTALAISR. Residues 56-76 traverse the membrane as a helical segment; sequence IVLLWLVLVSWWLSMFYPGQW. Topologically, residues 77-94 are extracellular; the sequence is MTEGIDVIVHNVWTTLNQ. The chain crosses the membrane as a helical span at residues 95–115; sequence ISLWLATSFSVFCFLKVANFS. At 116 to 128 the chain is on the cytoplasmic side; that stretch reads NTIFFYLKIRVKK. A helical membrane pass occupies residues 129–149; it reads VMTGTLIMFLLLLGLNIIVIN. The Extracellular portion of the chain corresponds to 150 to 183; sequence ASKTILIPEYKVNMSNSLNLKNTQISMLFPFANT. A glycan (N-linked (GlcNAc...) asparagine) is linked at Asn-162. The chain crosses the membrane as a helical span at residues 184–204; it reads LFGFIPFAVSLVTFLLLFFSL. Topologically, residues 205 to 236 are cytoplasmic; the sequence is WKHQRKMHHGAQGCRDSSTKAHIRVLQTLIAS. The helical transmembrane segment at 237 to 257 threads the bilayer; the sequence is ILLYFVFFLSLVVKVWISLFL. The Extracellular portion of the chain corresponds to 258–261; that stretch reads ERML. Residues 262–282 traverse the membrane as a helical segment; sequence LLLITQAAKIAFPSLHPWVLI. At 283-324 the chain is on the cytoplasmic side; it reads LGNAKLRKASLSALQWLRCRHKDEHRRVQRPEVHSCGSSCMP.

The protein belongs to the G-protein coupled receptor T2R family.

The protein resides in the membrane. In terms of biological role, putative taste receptor which may play a role in the perception of bitterness. This is Taste receptor type 2 member 116 from Rattus norvegicus (Rat).